Reading from the N-terminus, the 213-residue chain is Adenylyl-sulfate kinase (213 aa).

Over residues Met1–Asp17 the composition is skewed to basic and acidic residues. A disordered region spans residues Met1–Ile20. Gly47–Ser54 contributes to the ATP binding site. Ser121 acts as the Phosphoserine intermediate in catalysis.

Belongs to the APS kinase family.

The catalysed reaction is adenosine 5'-phosphosulfate + ATP = 3'-phosphoadenylyl sulfate + ADP + H(+). The protein operates within sulfur metabolism; hydrogen sulfide biosynthesis; sulfite from sulfate: step 2/3. Catalyzes the synthesis of activated sulfate. The sequence is that of Adenylyl-sulfate kinase from Yersinia pestis.